The primary structure comprises 152 residues: Cytochrome c-type biogenesis protein CcmE (152 aa).

Residues 1 to 9 (MRGLKKQRR) are Cytoplasmic-facing. Residues 10-30 (IQILIVAAVALTLSSVLIGYA) form a helical; Signal-anchor for type II membrane protein membrane-spanning segment. Over 31–152 (LRDGINFFRP…PDGYARDGDS (122 aa)) the chain is Periplasmic. Heme-binding residues include His123 and Tyr127.

Belongs to the CcmE/CycJ family.

Its subcellular location is the cell inner membrane. Heme chaperone required for the biogenesis of c-type cytochromes. Transiently binds heme delivered by CcmC and transfers the heme to apo-cytochromes in a process facilitated by CcmF and CcmH. In Jannaschia sp. (strain CCS1), this protein is Cytochrome c-type biogenesis protein CcmE.